An 813-amino-acid chain; its full sequence is Lon protease (813 aa).

The 196-residue stretch at 30–225 (LPILPVRNIV…WLLQLMDKDI (196 aa)) folds into the Lon N-terminal domain. An ATP-binding site is contributed by 376–383 (GPPGVGKT). Residues 612 to 793 (DDLAGIVTGL…DEVLAIALLK (182 aa)) enclose the Lon proteolytic domain. Residues Ser699 and Lys742 contribute to the active site.

Belongs to the peptidase S16 family. Homohexamer. Organized in a ring with a central cavity.

Its subcellular location is the cytoplasm. It carries out the reaction Hydrolysis of proteins in presence of ATP.. Functionally, ATP-dependent serine protease that mediates the selective degradation of mutant and abnormal proteins as well as certain short-lived regulatory proteins. Required for cellular homeostasis and for survival from DNA damage and developmental changes induced by stress. Degrades polypeptides processively to yield small peptide fragments that are 5 to 10 amino acids long. Binds to DNA in a double-stranded, site-specific manner. In Cytophaga hutchinsonii (strain ATCC 33406 / DSM 1761 / CIP 103989 / NBRC 15051 / NCIMB 9469 / D465), this protein is Lon protease.